We begin with the raw amino-acid sequence, 95 residues long: Acylphosphatase (95 aa).

One can recognise an Acylphosphatase-like domain in the interval 7–95 (CTMAWVYGSV…RSWDKFAILY (89 aa)). Catalysis depends on residues Arg22 and Asn40.

It belongs to the acylphosphatase family.

It carries out the reaction an acyl phosphate + H2O = a carboxylate + phosphate + H(+). The polypeptide is Acylphosphatase (acyP) (Klebsiella pneumoniae subsp. pneumoniae (strain ATCC 700721 / MGH 78578)).